A 1943-amino-acid chain; its full sequence is Beta-L-arabinobiosidase (1943 aa).

The tat-type signal signal peptide spans 1 to 32; the sequence is MHHSTRKRWLASIGAVAAVATLATGGAVTAQA. F5/8 type C domains follow at residues 892-1049 and 1142-1302; these read TNVD…AYNT and SKEI…AYAI. Positions 1061–1157 constitute a PKD domain; sequence TPQVDAYVSS…HGIPSDGTVN (97 aa). 3 FIVAR domains span residues 1678–1716, 1746–1790, and 1823–1864; these read ANGLDASRYTAASWAEFQQIIDAAQAVYDDANATAEQVA, DAAK…AAVQ, and QAKK…VDAA. The tract at residues 1875–1906 is disordered; it reads TKVEQKPGSQQPGVTDTDKDDKDNKGDRVPPT. Over residues 1890-1902 the composition is skewed to basic and acidic residues; it reads DTDKDDKDNKGDR. A helical membrane pass occupies residues 1908-1928; the sequence is AAVSVVAAAAVLLTAAGVTIL.

Belongs to the glycosyl hydrolase 121 family. Predicted to be exported by the Tat system. The position of the signal peptide cleavage has not been experimentally proven.

The protein resides in the membrane. It catalyses the reaction 4-O-(beta-L-arabinofuranosyl-(1-&gt;2)-beta-L-arabinofuranosyl-(1-&gt;2)-beta-L-arabinofuranosyl)-(2S,4S)-4-hydroxyproline + H2O = 4-O-(beta-L-arabinofuranosyl)-(2S,4S)-4-hydroxyproline + beta-L-arabinofuranosyl-(1-&gt;2)-beta-L-arabinofuranose. Its function is as follows. Beta-L-arabinobiosidase that removes L-arabinofuranose-beta-1,2-L-arabinofuranose disaccharide from various substrates such as carrot extensin and potato lectin. Also acts on L-arabinofuranose (Ara)-beta-1,2-Ara-beta-1,2-Ara-beta-Hyp (Ara(3)-Hyp) but not on Ara-beta-1,3-Ara-beta-1,2-Ara-beta-1,2-Ara-beta--Hyp (Ara(4)-Hyp) or Ara-beta-1,2-Ara-beta-Hyp (Ara(2)-Hyp), suggesting a specificity for unmodified Ara(3)-Hyp substrate. In the presence of 1-alkanols, shows transglycosylation activity, retaining the anomeric configuration of the arabinofuranose residue. This chain is Beta-L-arabinobiosidase (hypBA2), found in Bifidobacterium longum subsp. longum (strain ATCC 15707 / DSM 20219 / JCM 1217 / NCTC 11818 / E194b).